A 44-amino-acid polypeptide reads, in one-letter code: Keratin-associated protein 20-3 (44 aa).

The protein belongs to the KRTAP type 20 family. Interacts with hair keratins.

Functionally, in the hair cortex, hair keratin intermediate filaments are embedded in an interfilamentous matrix, consisting of hair keratin-associated proteins (KRTAP), which are essential for the formation of a rigid and resistant hair shaft through their extensive disulfide bond cross-linking with abundant cysteine residues of hair keratins. The matrix proteins include the high-sulfur and high-glycine-tyrosine keratins. In Homo sapiens (Human), this protein is Keratin-associated protein 20-3 (KRTAP20-3).